A 380-amino-acid polypeptide reads, in one-letter code: Large ribosomal subunit protein mL38 (380 aa).

The transit peptide at 1–26 directs the protein to the mitochondrion; it reads MAAPWWRAAFSVTGRCRGISTSASLS. Residues 98–123 adopt a coiled-coil conformation; it reads SRTQKLQERKRFLQELRANSEEERAA.

This sequence belongs to the phosphatidylethanolamine-binding protein family. Mitochondrion-specific ribosomal protein mL38 subfamily. Component of the mitochondrial ribosome large subunit (39S) which comprises a 16S rRNA and about 50 distinct proteins.

It is found in the mitochondrion. The chain is Large ribosomal subunit protein mL38 (Mrpl38) from Rattus norvegicus (Rat).